We begin with the raw amino-acid sequence, 536 residues long: Nucleosome assembly protein 1-like 3 (536 aa).

2 disordered regions span residues 1-104 (MAEA…DKLP) and 160-338 (PTEE…KEDP). The segment covering 35-75 (SNSSSSTTSCGSTGSSSSSSSSSSSSSSSSSGSSGSSSNGS) has biased composition (low complexity). The segment covering 77-95 (LHQKKRVPGPSRRAQRRPS) has biased composition (basic residues). Positions 160–184 (PTEEECEWNSEEEFSGDEEMQDDTP) are enriched in acidic residues. 2 stretches are compositionally biased toward basic and acidic residues: residues 199–220 (GKENTEVKEEVKDVPEEVPEAK) and 227–269 (PKET…KTDS). Residues 287–300 (TQANAEYTDQPTED) are compositionally biased toward polar residues. Basic and acidic residues predominate over residues 306–324 (PVREAQKRVPETRPEERVN).

It belongs to the nucleosome assembly protein (NAP) family.

The protein resides in the nucleus. This chain is Nucleosome assembly protein 1-like 3 (Nap1l3), found in Rattus norvegicus (Rat).